A 205-amino-acid polypeptide reads, in one-letter code: uncharacterized protein (205 aa).

A helical transmembrane segment spans residues 5–27 (IIVLFIIHFIMINENVFIALLHY).

It to T.maritima TM1570.

It is found in the membrane. This is an uncharacterized protein from Aquifex aeolicus (strain VF5).